Here is a 205-residue protein sequence, read N- to C-terminus: Urease accessory protein UreG (205 aa).

A GTP-binding site is contributed by 14–21; that stretch reads GPVGSGKT.

The protein belongs to the SIMIBI class G3E GTPase family. UreG subfamily. Homodimer. UreD, UreF and UreG form a complex that acts as a GTP-hydrolysis-dependent molecular chaperone, activating the urease apoprotein by helping to assemble the nickel containing metallocenter of UreC. The UreE protein probably delivers the nickel.

The protein resides in the cytoplasm. Functionally, facilitates the functional incorporation of the urease nickel metallocenter. This process requires GTP hydrolysis, probably effectuated by UreG. This Proteus mirabilis (strain HI4320) protein is Urease accessory protein UreG.